We begin with the raw amino-acid sequence, 991 residues long: Pro-apoptotic serine protease NMA111 (991 aa).

Residues 1 to 57 (MTVGKRKLSNGTVNEAKRLDDHVPVVAPSTNPDFENANGEDNEDIDDYSSEGEMSPQ) form a disordered region. Positions 38-50 (NGEDNEDIDDYSS) are enriched in acidic residues. Positions 86–269 (HVSNFDTESS…LPVYRPLRAL (184 aa)) are serine protease. Residues His-117, Asp-148, and Ser-231 each act as charge relay system in the active site. PDZ domains are found at residues 296-374 (RRLG…QRNG) and 885-957 (PHHG…VSFD).

It belongs to the peptidase S1C family.

The protein resides in the nucleus. In terms of biological role, nuclear serine protease which mediates apoptosis. The sequence is that of Pro-apoptotic serine protease NMA111 (NMA111) from Meyerozyma guilliermondii (strain ATCC 6260 / CBS 566 / DSM 6381 / JCM 1539 / NBRC 10279 / NRRL Y-324) (Yeast).